The primary structure comprises 687 residues: Putative mitochondrial carnitine O-acetyltransferase (687 aa).

The active-site Proton acceptor is histidine 346. 446–459 provides a ligand contact to CoA; it reads GASHIKTVFKCSPD. Residues tyrosine 481 and threonine 494 each coordinate (R)-carnitine. Serine 517 is subject to Phosphoserine.

The protein belongs to the carnitine/choline acetyltransferase family.

Its subcellular location is the mitochondrion inner membrane. It catalyses the reaction (R)-carnitine + acetyl-CoA = O-acetyl-(R)-carnitine + CoA. Involved in the transfer of acetyl-CoA into mitochondria. May also be involved in the metabolism of acetate and of ethanol. This is Putative mitochondrial carnitine O-acetyltransferase (YAT1) from Saccharomyces cerevisiae (strain ATCC 204508 / S288c) (Baker's yeast).